We begin with the raw amino-acid sequence, 167 residues long: Telethonin (167 aa).

Phosphoserine is present on S39. The tract at residues 144-167 is disordered; the sequence is VPVSKPGALRRSLSRSMSQEAQRG. Positions 157–167 are enriched in polar residues; the sequence is SRSMSQEAQRG.

Interacts with MYOZ1, MYOZ2 and MYOZ3. Interacts with CSRP3. Interacts directly with the N-terminal Ig-like domains of 2 titin (TTN) molecules. Interacts with ANKRD2; the interaction is direct. In terms of tissue distribution, heart and skeletal muscle.

The protein resides in the cytoplasm. The protein localises to the myofibril. It is found in the sarcomere. Functionally, muscle assembly regulating factor. Mediates the antiparallel assembly of titin (TTN) molecules at the sarcomeric Z-disk. The polypeptide is Telethonin (TCAP) (Homo sapiens (Human)).